Here is a 151-residue protein sequence, read N- to C-terminus: UPF0178 protein PST_0536 (151 aa).

It belongs to the UPF0178 family.

This Stutzerimonas stutzeri (strain A1501) (Pseudomonas stutzeri) protein is UPF0178 protein PST_0536.